The sequence spans 124 residues: Large ribosomal subunit protein bL17 (124 aa).

This sequence belongs to the bacterial ribosomal protein bL17 family. Part of the 50S ribosomal subunit. Contacts protein L32.

This Borrelia turicatae (strain 91E135) protein is Large ribosomal subunit protein bL17.